Here is a 1353-residue protein sequence, read N- to C-terminus: Inhibitor of Bruton tyrosine kinase (1353 aa).

ANK repeat units follow at residues 51–80 (FGRNALHLVSSCGKKGVLDWLIQKGVDLLV) and 85–114 (SGWTALHRSIFYGHIDCVWSLLKHGVSLYI). RCC1 repeat units lie at residues 141–194 (PTDV…FLSQ), 195–246 (KGQV…VLTE), and 248–301 (GCVY…LWTR). BTB domains lie at 564-644 (HDVT…DFLT) and 768-836 (CDVT…VVIK). Residues 806–835 (SSCAALEMPIHSDILKVILDYLYTDEAVVI) form an ANK 3 repeat. The disordered stretch occupies residues 970 to 1001 (HSETMFKKAKTKAKKKPRKRSDSSGGYNLSDI). The span at 976–988 (KKAKTKAKKKPRK) shows a compositional bias: basic residues. Ser-990 is modified (phosphoserine). Residues 992–1001 (SSGGYNLSDI) show a composition bias toward polar residues. 10 positions are modified to phosphoserine: Ser-1004, Ser-1030, Ser-1033, Ser-1039, Ser-1045, Ser-1054, Ser-1083, Ser-1111, Ser-1113, and Ser-1116. Residues 1134–1155 (KCGATPKSHLGKTVSHGVKLSQ) are disordered.

In terms of assembly, interacts with the PH domain of BTK. Isoform 2 does not interact with BTK. As to expression, expressed in DeFew, HEK293T, HeLa and in Jurkat, MC3 and NB4 lymphoid cells (at protein level). Isoform 1 is the predominant isoform expressed in all examined tissues and cell lines. Highly expressed in hemopoietic tissues (fetal liver, spleen, lymph node, thymus, peripheral blood leukocytes and bone marrow). Weakly or not expressed in other tissues.

It localises to the cytoplasm. Its subcellular location is the membrane. The protein resides in the nucleus. Acts as an inhibitor of BTK tyrosine kinase activity, thereby playing a role in B-cell development. Down-regulates BTK kinase activity, leading to interference with BTK-mediated calcium mobilization and NF-kappa-B-driven transcription. The sequence is that of Inhibitor of Bruton tyrosine kinase (IBTK) from Homo sapiens (Human).